The following is a 207-amino-acid chain: Venom allergen 5 (207 aa).

Cystine bridges form between Cys4–Cys16, Cys8–Cys105, and Cys29–Cys97. The region spanning 49–192 (DEHNRFRQKV…MKSHYLVCNY (144 aa)) is the SCP domain. Phosphotyrosine is present on Tyr111. Residue Lys141 is glycosylated (N-linked (Glc) (glycation) lysine). The cysteines at positions 173 and 190 are disulfide-linked.

The protein belongs to the CRISP family. Venom allergen 5-like subfamily. Post-translationally, glycosylated. As to expression, expressed by the venom gland.

It is found in the secreted. This chain is Venom allergen 5, found in Polybia paulista (Neotropical social wasp).